The following is a 244-amino-acid chain: 3-oxoacyl-[acyl-carrier-protein] reductase FabG (244 aa).

NADP(+)-binding positions include 9 to 12, 60 to 61, and asparagine 87; these read GASR and NV. Serine 139 is a binding site for substrate. Residue tyrosine 152 is the Proton acceptor of the active site. NADP(+) is bound by residues 152-156 and isoleucine 185; that span reads YVATK.

It belongs to the short-chain dehydrogenases/reductases (SDR) family. As to quaternary structure, homotetramer.

The catalysed reaction is a (3R)-hydroxyacyl-[ACP] + NADP(+) = a 3-oxoacyl-[ACP] + NADPH + H(+). It functions in the pathway lipid metabolism; fatty acid biosynthesis. Its function is as follows. Catalyzes the NADPH-dependent reduction of beta-ketoacyl-ACP substrates to beta-hydroxyacyl-ACP products, the first reductive step in the elongation cycle of fatty acid biosynthesis. The sequence is that of 3-oxoacyl-[acyl-carrier-protein] reductase FabG (fabG) from Staphylococcus epidermidis (strain ATCC 35984 / DSM 28319 / BCRC 17069 / CCUG 31568 / BM 3577 / RP62A).